The following is a 1051-amino-acid chain: Carbamoyl phosphate synthase large chain (1051 aa).

A carboxyphosphate synthetic domain region spans residues Met1–Asp399. Arg127, Arg167, Gly173, Gly174, Lys206, Leu208, Glu213, Gly239, Val240, His241, Gln282, and Glu296 together coordinate ATP. The 195-residue stretch at Arg131–Leu325 folds into the ATP-grasp 1 domain. The Mg(2+) site is built by Gln282, Glu296, and Asn298. Positions 282, 296, and 298 each coordinate Mn(2+). The interval Ile400–Leu548 is oligomerization domain. Residues Glu549 to Asn930 form a carbamoyl phosphate synthetic domain region. The ATP-grasp 2 domain maps to Ser673–Phe863. ATP-binding residues include Arg709, Lys748, Ile750, Glu755, Gly779, Val780, His781, Ser782, Gln822, and Glu834. Residues Gln822, Glu834, and Asn836 each contribute to the Mg(2+) site. Positions 822, 834, and 836 each coordinate Mn(2+). Residues Asn930–Ile1051 enclose the MGS-like domain. The segment at Arg931 to Ile1051 is allosteric domain.

This sequence belongs to the CarB family. Composed of two chains; the small (or glutamine) chain promotes the hydrolysis of glutamine to ammonia, which is used by the large (or ammonia) chain to synthesize carbamoyl phosphate. Tetramer of heterodimers (alpha,beta)4. Requires Mg(2+) as cofactor. The cofactor is Mn(2+).

The catalysed reaction is hydrogencarbonate + L-glutamine + 2 ATP + H2O = carbamoyl phosphate + L-glutamate + 2 ADP + phosphate + 2 H(+). The enzyme catalyses hydrogencarbonate + NH4(+) + 2 ATP = carbamoyl phosphate + 2 ADP + phosphate + 2 H(+). It functions in the pathway amino-acid biosynthesis; L-arginine biosynthesis; carbamoyl phosphate from bicarbonate: step 1/1. It participates in pyrimidine metabolism; UMP biosynthesis via de novo pathway; (S)-dihydroorotate from bicarbonate: step 1/3. In terms of biological role, large subunit of the glutamine-dependent carbamoyl phosphate synthetase (CPSase). CPSase catalyzes the formation of carbamoyl phosphate from the ammonia moiety of glutamine, carbonate, and phosphate donated by ATP, constituting the first step of 2 biosynthetic pathways, one leading to arginine and/or urea and the other to pyrimidine nucleotides. The large subunit (synthetase) binds the substrates ammonia (free or transferred from glutamine from the small subunit), hydrogencarbonate and ATP and carries out an ATP-coupled ligase reaction, activating hydrogencarbonate by forming carboxy phosphate which reacts with ammonia to form carbamoyl phosphate. The polypeptide is Carbamoyl phosphate synthase large chain (Saccharolobus islandicus (strain L.S.2.15 / Lassen #1) (Sulfolobus islandicus)).